A 385-amino-acid chain; its full sequence is Putative glutamate--cysteine ligase 2 (385 aa).

Belongs to the glutamate--cysteine ligase type 2 family. YbdK subfamily.

It carries out the reaction L-cysteine + L-glutamate + ATP = gamma-L-glutamyl-L-cysteine + ADP + phosphate + H(+). ATP-dependent carboxylate-amine ligase which exhibits weak glutamate--cysteine ligase activity. The protein is Putative glutamate--cysteine ligase 2 of Herpetosiphon aurantiacus (strain ATCC 23779 / DSM 785 / 114-95).